Here is a 1113-residue protein sequence, read N- to C-terminus: Atrial natriuretic peptide-converting enzyme (1113 aa).

The Cytoplasmic segment spans residues 1-112; the sequence is MGRVSFSVRV…QKLVTANLLR (112 aa). A helical; Signal-anchor for type II membrane protein membrane pass occupies residues 113 to 133; sequence FLLLVLIPCICALIVLLAILL. The Extracellular portion of the chain corresponds to 134–1113; it reads SFVGTLKRVY…QTFLQKKSQG (980 aa). 3 N-linked (GlcNAc...) asparagine glycosylation sites follow: Asn147, Asn202, and Asn208. The tract at residues 176-202 is disordered; it reads APSLPPSQSTPAWTPRAPSPEDQSHRN. The 127-residue stretch at 201–327 folds into the FZ 1 domain; the sequence is RNTSTCMNIT…SSVRKSCFSL (127 aa). 8 cysteine pairs are disulfide-bonded: Cys206/Cys266, Cys214/Cys259, Cys250/Cys290, Cys279/Cys324, Cys283/Cys307, Cys337/Cys350, Cys345/Cys363, and Cys357/Cys372. 2 N-linked (GlcNAc...) asparagine glycosylation sites follow: Asn298 and Asn317. 4 LDL-receptor class A domains span residues 336-372, 373-408, 409-445, and 446-483; these read LCGG…EAHC, NCSK…EQNC, DCNL…EVNC, and SCHS…ENCS. A glycan (N-linked (GlcNAc...) asparagine) is linked at Asn373. 9 cysteine pairs are disulfide-bonded: Cys374-Cys386, Cys381-Cys399, Cys393-Cys408, Cys410-Cys423, Cys418-Cys436, Cys430-Cys445, Cys447-Cys460, Cys455-Cys473, and Cys467-Cys482. Asn411 is a glycosylation site (N-linked (GlcNAc...) asparagine). An N-linked (GlcNAc...) asparagine glycan is attached at Asn444. N-linked (GlcNAc...) asparagine glycosylation is found at Asn481, Asn519, and Asn537. The 124-residue stretch at 518–641 folds into the FZ 2 domain; the sequence is SNCSQCEPIT…SSDNQTCLLP (124 aa). Disulfide bonds link Cys523–Cys586, Cys531–Cys579, Cys570–Cys608, Cys597–Cys638, Cys601–Cys625, Cys648–Cys660, Cys655–Cys673, Cys667–Cys682, Cys684–Cys698, Cys692–Cys711, Cys705–Cys720, Cys723–Cys735, Cys730–Cys748, and Cys742–Cys757. An N-linked (GlcNAc...) asparagine glycan is attached at Asn635. 3 consecutive LDL-receptor class A domains span residues 647–682, 683–721, and 722–757; these read ECSP…EENC, GCKE…KNCS, and FCQD…EWGC. The N-linked (GlcNAc...) asparagine glycan is linked to Asn719. The 96-residue stretch at 758–853 folds into the SRCR domain; it reads VTLSKNGNSS…SRSEISLLCS (96 aa). N-linked (GlcNAc...) asparagine glycans are attached at residues Asn765 and Asn828. 6 cysteine pairs are disulfide-bonded: Cys782–Cys884, Cys857–Cys979, Cys895–Cys911, Cys993–Cys1058, Cys1022–Cys1037, and Cys1048–Cys1077. A Peptidase S1 domain is found at 869 to 1102; sequence ILGGRTSRPG…FVGWIERQIY (234 aa). Catalysis depends on charge relay system residues His910 and Asp959. N-linked (GlcNAc...) asparagine glycosylation occurs at Asn970. The active-site Charge relay system is the Ser1052. A glycan (N-linked (GlcNAc...) asparagine) is linked at Asn1089.

This sequence belongs to the peptidase S1 family. Post-translationally, N-glycosylated; required for processing and activation. In terms of processing, activated through proteolytic processing by a trypsin-like protease; cleaved into a N-terminal propeptide and an activated corin protease fragment. Atrial natriuretic peptide-converting enzyme, 180 kDa soluble fragment is produced by cleavage by ADAM10. Cleavage by ADAM10 to produce soluble 180 kDa soluble fragment takes place after the transmembrane region and before FZ 1. A disulfide bond links the activated corin protease fragment and the N-terminal propeptide. The disulfide bond also links the activated corin protease fragment with Atrial natriuretic peptide-converting enzyme, 180 kDa soluble fragment. In terms of tissue distribution, highly expressed in heart. Also expressed in pregnant uterus.

Its subcellular location is the cell membrane. The protein localises to the secreted. Serine-type endopeptidase involved in atrial natriuretic peptide (NPPA) processing. Converts through proteolytic cleavage the non-functional propeptide NPPA into the active hormone, thereby regulating blood pressure in heart and promoting natriuresis, diuresis and vasodilation. Proteolytic cleavage of pro-NPPA also plays a role in female pregnancy by promoting trophoblast invasion and spiral artery remodeling in uterus. Also acts as a regulator of sodium reabsorption in kidney. May also process pro-NPPB the B-type natriuretic peptide. In Mus musculus (Mouse), this protein is Atrial natriuretic peptide-converting enzyme (Corin).